Consider the following 418-residue polypeptide: Nucleoredoxin (418 aa).

Positions 109–309 (KYKVTSIPSL…ESNAVQLHEG (201 aa)) constitute a Thioredoxin domain.

It belongs to the nucleoredoxin family.

It is found in the cytoplasm. It localises to the cytosol. The protein localises to the nucleus. The enzyme catalyses [protein]-dithiol + NAD(+) = [protein]-disulfide + NADH + H(+). It carries out the reaction [protein]-dithiol + NADP(+) = [protein]-disulfide + NADPH + H(+). In terms of biological role, functions as a redox-dependent negative regulator of the Wnt signaling pathway. This chain is Nucleoredoxin (nxn), found in Danio rerio (Zebrafish).